The sequence spans 256 residues: MSLAVRVIPCLDVDAGRVVKGVNFENLRDAGDPVELARRYNAAGADEITFLDVTASTSDRATTYDVVTRTAEEVFIPLTVGGGVRTVEDVDRLLRTGADKVSVNTAAVARPELITEITRRFGSQVLVLSLDARRTEDPGCASGYEVTTHGGRRGTGIDAVAWCREASERGVGEILLNSIDADGTREGFDLEMIRDVRAVTRVPLIASGGAGEPEHFPPAVAAGADAVLAASLFHFGPDDMLARVKDALRQAGHTVR.

Residues Asp12 and Asp131 contribute to the active site.

This sequence belongs to the HisA/HisF family. As to quaternary structure, heterodimer of HisH and HisF.

The protein localises to the cytoplasm. The catalysed reaction is 5-[(5-phospho-1-deoxy-D-ribulos-1-ylimino)methylamino]-1-(5-phospho-beta-D-ribosyl)imidazole-4-carboxamide + L-glutamine = D-erythro-1-(imidazol-4-yl)glycerol 3-phosphate + 5-amino-1-(5-phospho-beta-D-ribosyl)imidazole-4-carboxamide + L-glutamate + H(+). It participates in amino-acid biosynthesis; L-histidine biosynthesis; L-histidine from 5-phospho-alpha-D-ribose 1-diphosphate: step 5/9. Functionally, IGPS catalyzes the conversion of PRFAR and glutamine to IGP, AICAR and glutamate. The HisF subunit catalyzes the cyclization activity that produces IGP and AICAR from PRFAR using the ammonia provided by the HisH subunit. This chain is Imidazole glycerol phosphate synthase subunit HisF, found in Micrococcus luteus (strain ATCC 4698 / DSM 20030 / JCM 1464 / CCM 169 / CCUG 5858 / IAM 1056 / NBRC 3333 / NCIMB 9278 / NCTC 2665 / VKM Ac-2230) (Micrococcus lysodeikticus).